A 411-amino-acid chain; its full sequence is Bifunctional protein GlmU (411 aa).

The segment at M1–N204 is pyrophosphorylase. UTP-binding positions include L6 to G9, Q74, and G79. Residues T80, G130, N142, and N158 each coordinate N-acetyl-alpha-D-glucosamine 1-phosphate. A linker region spans residues G205 to L224. The segment at N225–N411 is N-acetyltransferase. H308 acts as the Proton acceptor in catalysis. Positions 384 and 401 each coordinate acetyl-CoA.

The protein in the N-terminal section; belongs to the N-acetylglucosamine-1-phosphate uridyltransferase family. This sequence in the C-terminal section; belongs to the transferase hexapeptide repeat family.

The catalysed reaction is N-acetyl-alpha-D-glucosamine 1-phosphate + UTP + H(+) = UDP-N-acetyl-alpha-D-glucosamine + diphosphate. It catalyses the reaction alpha-D-glucosamine 1-phosphate + acetyl-CoA = N-acetyl-alpha-D-glucosamine 1-phosphate + CoA + H(+). The protein operates within nucleotide-sugar biosynthesis; UDP-N-acetyl-alpha-D-glucosamine biosynthesis; N-acetyl-alpha-D-glucosamine 1-phosphate from alpha-D-glucosamine 6-phosphate (route II): step 2/2. It participates in nucleotide-sugar biosynthesis; UDP-N-acetyl-alpha-D-glucosamine biosynthesis; UDP-N-acetyl-alpha-D-glucosamine from N-acetyl-alpha-D-glucosamine 1-phosphate: step 1/1. Functionally, catalyzes the last two sequential reactions in the de novo biosynthetic pathway for UDP-N-acetyl-glucosamine (UDP-GlcNAc). Responsible for the acetylation of GlcN-1-P to GlcNAc-1-P, and for the uridyl transfer from UTP to GlcNAc-1-P, to produce UDP-GlcNAc and pyrophosphate. This is Bifunctional protein GlmU from Methanococcus maripaludis (strain C5 / ATCC BAA-1333).